The sequence spans 788 residues: Histidine--tRNA ligase, cytoplasmic (788 aa).

The interval Pro-252–Leu-286 is disordered.

It belongs to the class-II aminoacyl-tRNA synthetase family. Homodimer.

It catalyses the reaction tRNA(His) + L-histidine + ATP = L-histidyl-tRNA(His) + AMP + diphosphate + H(+). The sequence is that of Histidine--tRNA ligase, cytoplasmic from Oryza sativa subsp. japonica (Rice).